The primary structure comprises 103 residues: Large ribosomal subunit protein uL24 (103 aa).

Belongs to the universal ribosomal protein uL24 family. As to quaternary structure, part of the 50S ribosomal subunit.

Its function is as follows. One of two assembly initiator proteins, it binds directly to the 5'-end of the 23S rRNA, where it nucleates assembly of the 50S subunit. One of the proteins that surrounds the polypeptide exit tunnel on the outside of the subunit. The chain is Large ribosomal subunit protein uL24 from Ruthia magnifica subsp. Calyptogena magnifica.